Reading from the N-terminus, the 322-residue chain is Cytochrome c biogenesis protein CcsA (322 aa).

8 consecutive transmembrane segments (helical) span residues 17 to 37, 44 to 64, 71 to 91, 98 to 118, 143 to 163, 225 to 245, 258 to 273, and 286 to 306; these read VVSI…IVGL, GMIA…IYLG, LYES…VPYF, LSAL…SGLL, MVLG…LLVI, VISL…VWAN, ETWA…IYLH, and AIVA…VNLL.

It belongs to the CcmF/CycK/Ccl1/NrfE/CcsA family. As to quaternary structure, may interact with Ccs1.

The protein resides in the plastid. It is found in the chloroplast thylakoid membrane. Required during biogenesis of c-type cytochromes (cytochrome c6 and cytochrome f) at the step of heme attachment. The sequence is that of Cytochrome c biogenesis protein CcsA from Vitis vinifera (Grape).